We begin with the raw amino-acid sequence, 121 residues long: Large ribosomal subunit protein uL22 (121 aa).

This sequence belongs to the universal ribosomal protein uL22 family. Part of the 50S ribosomal subunit.

This protein binds specifically to 23S rRNA; its binding is stimulated by other ribosomal proteins, e.g. L4, L17, and L20. It is important during the early stages of 50S assembly. It makes multiple contacts with different domains of the 23S rRNA in the assembled 50S subunit and ribosome. Functionally, the globular domain of the protein is located near the polypeptide exit tunnel on the outside of the subunit, while an extended beta-hairpin is found that lines the wall of the exit tunnel in the center of the 70S ribosome. In Synechococcus sp. (strain WH7803), this protein is Large ribosomal subunit protein uL22.